We begin with the raw amino-acid sequence, 576 residues long: Laccase-1 (576 aa).

Residues 1–19 form the signal peptide; the sequence is MARTTFLVSVSLFVSAVLA. Plastocyanin-like domains are found at residues 21 to 145 and 157 to 304; these read TVEY…LVIY and VDDE…LVYE. The N-linked (GlcNAc...) asparagine glycan is linked to Asn-41. 4 residues coordinate Cu cation: His-82, His-84, His-127, and His-129. A disulfide bridge connects residues Cys-103 and Cys-562. Asn-182, Asn-228, Asn-294, and Asn-368 each carry an N-linked (GlcNAc...) asparagine glycan. The 201-residue stretch at 376-576 folds into the Plastocyanin-like 3 domain; that stretch reads DESKLVPLEY…NWLKSNPGQL (201 aa). Cu cation-binding residues include His-471, His-474, His-476, His-523, Cys-524, His-525, and His-529.

Belongs to the multicopper oxidase family. Homodimer. The cofactor is Cu cation. As to expression, in mycelia, at a lower level than LCC4.

Its subcellular location is the secreted. It catalyses the reaction 4 hydroquinone + O2 = 4 benzosemiquinone + 2 H2O. Lignin degradation and detoxification of lignin-derived products. The chain is Laccase-1 (LCC1) from Thanatephorus cucumeris (Black scurf of potato).